The following is a 386-amino-acid chain: Patatin-15 (386 aa).

Positions 1-23 (MATTKSFLILFFMILATTSSTCA) are cleaved as a signal peptide. In terms of domain architecture, PNPLA spans 32–229 (LSIDGGGIKG…TVGDPALLSL (198 aa)). Positions 36-41 (GGGIKG) match the GXGXXG motif. The GXSXG motif lies at 75-79 (GTSTG). The active-site Nucleophile is the serine 77. Asparagine 115 carries N-linked (GlcNAc...) asparagine glycosylation. Residue aspartate 215 is the Proton acceptor of the active site. A DGA/G motif is present at residues 215 to 217 (DGG). The stretch at 321–384 (ENALTGTTTE…DRKKLRANKA (64 aa)) forms a coiled coil.

This sequence belongs to the patatin family. As to expression, tuber.

The protein localises to the vacuole. Functionally, probable lipolytic acyl hydrolase (LAH), an activity which is thought to be involved in the response of tubers to pathogens. The chain is Patatin-15 from Solanum tuberosum (Potato).